Reading from the N-terminus, the 343-residue chain is Undecaprenyl-diphosphatase 2 (343 aa).

Helical transmembrane passes span 21–41 (LFPV…GGSW), 57–77 (PYLT…LVFF), 104–124 (LAWL…ALEH), and 129–149 (LFAK…ILLA). Residues 179–193 (VPAPATVPTQTTSAP) show a composition bias toward low complexity. Residues 179–202 (VPAPATVPTQTTSAPGGRATARHT) are disordered. The next 4 helical transmembrane spans lie at 225–245 (AGVI…RSGI), 265–285 (FLLA…ALAG), 294–314 (QVIL…RFLV), and 322–342 (LTPF…RFAI).

Belongs to the UppP family.

It is found in the cell membrane. The catalysed reaction is di-trans,octa-cis-undecaprenyl diphosphate + H2O = di-trans,octa-cis-undecaprenyl phosphate + phosphate + H(+). Its function is as follows. Catalyzes the dephosphorylation of undecaprenyl diphosphate (UPP). Confers resistance to bacitracin. The chain is Undecaprenyl-diphosphatase 2 from Frankia alni (strain DSM 45986 / CECT 9034 / ACN14a).